Consider the following 375-residue polypeptide: Trichodiene synthase (375 aa).

Belongs to the trichodiene synthase family.

The enzyme catalyses (2E,6E)-farnesyl diphosphate = trichodiene + diphosphate. The protein operates within sesquiterpene biosynthesis; trichothecene biosynthesis. In terms of biological role, TS is a member of the terpene cyclase group of enzymes. It catalyzes the isomerization and cyclization of farnesyl pyro-phosphate to form trichodiene, the first cyclic intermediate in the biosynthetic pathway for trichothecenes. It serves to branch trichothecene biosynthesis from the isoprenoid pathway. The chain is Trichodiene synthase (TRI5) from Fusarium austroamericanum.